The primary structure comprises 316 residues: Epoxide hydrolase 2 (316 aa).

An AB hydrolase-1 domain is found at 25–302 (PAVLFLHGFP…AAHFINQERP (278 aa)). Asp101 serves as the catalytic Nucleophile. An epoxide is bound at residue Tyr150. The active-site Proton donor is the Tyr230. His295 functions as the Proton acceptor in the catalytic mechanism.

The protein belongs to the AB hydrolase superfamily. Epoxide hydrolase family. In terms of assembly, homodimer. As to expression, highly expressed in young fruits 15 days after anthesis (15-DAA). Also observed in stems and leaves.

It catalyses the reaction an epoxide + H2O = an ethanediol. The enzyme catalyses (24S)-24,25-epoxycucurbitadienol + H2O = (24R)-24,25-dihydroxycucurbitadienol. Its pathway is secondary metabolite biosynthesis; terpenoid biosynthesis. Epoxide hydrolase involved in the biosynthesis of cucurbitacin and mogroside tetracyclic triterpene natural products (e.g. siamenoside I and mogrosides IV, V and VI). Cucurbitacins have cytotoxic properties and exhibit deterrent taste as a defense barrier against herbivores. Mogrosides are nonsugar highly oxygenated compounds used as high-intensity zero-calorie sweeteners; they also possess pharmacological properties such as regulating immunity, lowering blood sugar and lipid levels, protecting the liver, and acting as antioxidants and antitumor agents. Catalyzes the hydrolysis of aromatic epoxide-containing substrates, such as the conversion of 24,25-epoxycucurbitadienol to 24,25-dihydroxycucurbitadienol. In Siraitia grosvenorii (Monk's fruit), this protein is Epoxide hydrolase 2.